Here is a 504-residue protein sequence, read N- to C-terminus: L-carnitine/gamma-butyrobetaine antiporter (504 aa).

The next 12 membrane-spanning stretches (helical) occupy residues 8–28 (AGIE…LCWL), 51–71 (WGWA…WLVF), 92–112 (IFMM…SIEI), 143–163 (GPLP…FFFV), 195–215 (FYLV…TPLV), 231–251 (LDAI…AFGL), 263–283 (TYLS…SFIV), 315–335 (AWTV…SIFL), 347–367 (LCLG…TYSG), 403–423 (LSTA…VTLI), 446–466 (LLVR…LLAL), and 475–495 (AIIA…LSFI).

Belongs to the BCCT transporter (TC 2.A.15) family. CaiT subfamily. As to quaternary structure, homotrimer.

The protein localises to the cell inner membrane. The enzyme catalyses 4-(trimethylamino)butanoate(in) + (R)-carnitine(out) = 4-(trimethylamino)butanoate(out) + (R)-carnitine(in). Its pathway is amine and polyamine metabolism; carnitine metabolism. Its function is as follows. Catalyzes the exchange of L-carnitine for gamma-butyrobetaine. The protein is L-carnitine/gamma-butyrobetaine antiporter of Proteus sp. (strain LE138).